Here is a 354-residue protein sequence, read N- to C-terminus: Ion-translocating oxidoreductase complex subunit D (354 aa).

The next 4 membrane-spanning stretches (helical) occupy residues 19-39 (IMLL…YYFG), 40-60 (FGVL…EFLV), 77-99 (AAVT…LSFF), and 119-139 (IFNP…ILMT). Thr-187 is subject to FMN phosphoryl threonine. 5 helical membrane-spanning segments follow: residues 221–241 (WISI…FNVI), 245–265 (IPVS…YFFK), 268–288 (MYYP…FFIA), 295–315 (SITK…IWLI), and 319–339 (GNYP…VPLI).

The protein belongs to the NqrB/RnfD family. As to quaternary structure, the complex is composed of six subunits: RnfA, RnfB, RnfC, RnfD, RnfE and RnfG. Requires FMN as cofactor.

It is found in the cell inner membrane. In terms of biological role, part of a membrane-bound complex that couples electron transfer with translocation of ions across the membrane. In Buchnera aphidicola subsp. Baizongia pistaciae (strain Bp), this protein is Ion-translocating oxidoreductase complex subunit D.